A 349-amino-acid chain; its full sequence is Flap endonuclease 1 (349 aa).

Positions 1–102 (MGVTELGKLI…AEIEARRRVK (102 aa)) are N-domain. Mg(2+) is bound by residues aspartate 31, aspartate 84, glutamate 156, glutamate 158, aspartate 177, aspartate 179, and aspartate 239. The tract at residues 120-261 (DVAKYMKRVI…KALKLVLEFG (142 aa)) is I-domain.

The protein belongs to the XPG/RAD2 endonuclease family. FEN1 subfamily. As to quaternary structure, interacts with PCNA. PCNA stimulates the nuclease activity without altering cleavage specificity. Mg(2+) is required as a cofactor.

Functionally, structure-specific nuclease with 5'-flap endonuclease and 5'-3' exonuclease activities involved in DNA replication and repair. During DNA replication, cleaves the 5'-overhanging flap structure that is generated by displacement synthesis when DNA polymerase encounters the 5'-end of a downstream Okazaki fragment. Binds the unpaired 3'-DNA end and kinks the DNA to facilitate 5' cleavage specificity. Cleaves one nucleotide into the double-stranded DNA from the junction in flap DNA, leaving a nick for ligation. Also involved in the base excision repair (BER) pathway. Acts as a genome stabilization factor that prevents flaps from equilibrating into structures that lead to duplications and deletions. Also possesses 5'-3' exonuclease activity on nicked or gapped double-stranded DNA. The sequence is that of Flap endonuclease 1 from Pyrobaculum neutrophilum (strain DSM 2338 / JCM 9278 / NBRC 100436 / V24Sta) (Thermoproteus neutrophilus).